The primary structure comprises 260 residues: F-actin-capping protein subunit beta (260 aa).

It belongs to the F-actin-capping protein beta subunit family. Component of the F-actin capping complex, composed of a heterodimer of an alpha and a beta subunit.

The protein resides in the cytoplasm. It is found in the cytoskeleton. The protein localises to the actin patch. Functionally, F-actin-capping proteins bind in a Ca(2+)-independent manner to the fast growing ends of actin filaments (barbed end) thereby blocking the exchange of subunits at these ends. Unlike other capping proteins (such as gelsolin and severin), these proteins do not sever actin filaments. This Yarrowia lipolytica (strain CLIB 122 / E 150) (Yeast) protein is F-actin-capping protein subunit beta (CAP2).